The chain runs to 177 residues: Large ribosomal subunit protein uL6 (177 aa).

This sequence belongs to the universal ribosomal protein uL6 family. Part of the 50S ribosomal subunit.

This protein binds to the 23S rRNA, and is important in its secondary structure. It is located near the subunit interface in the base of the L7/L12 stalk, and near the tRNA binding site of the peptidyltransferase center. The chain is Large ribosomal subunit protein uL6 from Stutzerimonas stutzeri (strain A1501) (Pseudomonas stutzeri).